A 441-amino-acid polypeptide reads, in one-letter code: Hexane cyclase gkaB (441 aa).

Residues 1-25 (MTKFLAGAAIVLAVAFGSFFSQSST) form the signal peptide. Residues Asn-77, Asn-153, Asn-184, and Asn-308 are each glycosylated (N-linked (GlcNAc...) asparagine).

It belongs to the Diels-Alderase family.

The protein operates within mycotoxin biosynthesis. Its function is as follows. Hexane cyclase; part of the gene cluster that mediates the biosynthesis of GKK1032, fungal natural products containing a macrocyclic para-cyclophane connected to a decahydrofluorene ring system that show potent antitumor activities. Within the pathway, gkaB functions synergistically with gkaX and gkaZ to form the cyclophane. The pathway begins with the PKS-NRPS gkaA which, with the help of the trans-enoyl reductase gkaC, synthesizes the polyketide-tyrosyl acyl thioester product which can be reductively off-loaded by the terminal reductase (R) domain in gkaA. The alpha/beta hydrolase gkaG is then required to catalyze the subsequent Knoevenagel condensation that affords the 3-pyrrolin-2-one ring, whereas the three proteins gkaB, gkaX and gkaZ then function synergistically to form the cyclophane. The protein is Hexane cyclase gkaB of Penicillium citrinum.